The chain runs to 372 residues: Alanine racemase (372 aa).

K36 acts as the Proton acceptor; specific for D-alanine in catalysis. An N6-(pyridoxal phosphate)lysine modification is found at K36. Residue R134 participates in substrate binding. Residue Y266 is the Proton acceptor; specific for L-alanine of the active site. M314 serves as a coordination point for substrate.

It belongs to the alanine racemase family. Pyridoxal 5'-phosphate serves as cofactor.

The catalysed reaction is L-alanine = D-alanine. The protein operates within amino-acid biosynthesis; D-alanine biosynthesis; D-alanine from L-alanine: step 1/1. Its function is as follows. Catalyzes the interconversion of L-alanine and D-alanine. May also act on other amino acids. The chain is Alanine racemase (alr) from Nitratidesulfovibrio vulgaris (strain DSM 19637 / Miyazaki F) (Desulfovibrio vulgaris).